The chain runs to 191 residues: Cdc42 homolog (191 aa).

10–17 contacts GTP; sequence GDGAVGKT. Residues 32–40 carry the Effector region motif; that stretch reads YVPTVFDNY. GTP is bound by residues 57–61 and 115–118; these read DTAGQ and TQID. Cys-188 carries the post-translational modification Cysteine methyl ester. A lipid anchor (S-geranylgeranyl cysteine) is attached at Cys-188. The propeptide at 189–191 is removed in mature form; it reads KFL.

This sequence belongs to the small GTPase superfamily. Rho family. CDC42 subfamily.

It is found in the cell junction. Its subcellular location is the adherens junction. The protein resides in the cell membrane. Its function is as follows. Regulates mbt kinase activity and is also required to recruit mbt to adherens junctions. Together with mbt, regulates photoreceptor cell morphogenesis. The protein is Cdc42 homolog of Aedes aegypti (Yellowfever mosquito).